Consider the following 246-residue polypeptide: Phycocyanobilin:ferredoxin oxidoreductase (246 aa).

Belongs to the HY2 family.

It catalyses the reaction (2R,3Z)-phycocyanobilin + 4 oxidized [2Fe-2S]-[ferredoxin] = biliverdin IXalpha + 4 reduced [2Fe-2S]-[ferredoxin] + 4 H(+). Functionally, catalyzes the four-electron reduction of biliverdin IX-alpha (2-electron reduction at both the A and D rings); the reaction proceeds via an isolatable 2-electron intermediate, 181,182-dihydrobiliverdin. The chain is Phycocyanobilin:ferredoxin oxidoreductase from Synechococcus sp. (strain CC9902).